The chain runs to 204 residues: MGSREEELRFILHDLGVGPYFLGTFDKHFPGFISKDRMSCAIVNTAGRETGGVHWLAMAWHPASQTFYMFDPFGFSDQKLKQIYNFEYQGLLKRSALTSTADRCLTLIQSTQSVQGPNSAACGLFCCMFLHAFVRWPLRAMDNNPTMNLIHGVPNNMLESPSSQNVFLRNQQNLYRFLRRHSPHFVKHAAQIEADTAFDKMLTN.

Active-site residues include His-54, Asp-71, and Cys-122.

The protein belongs to the peptidase C5 family. In terms of assembly, interacts with protease cofactor pVI-C; this interaction is necessary for protease activation.

Its subcellular location is the virion. The protein localises to the host nucleus. It carries out the reaction Cleaves proteins of the adenovirus and its host cell at two consensus sites: -Yaa-Xaa-Gly-Gly-|-Xaa- and -Yaa-Xaa-Gly-Xaa-|-Gly- (in which Yaa is Met, Ile or Leu, and Xaa is any amino acid).. With respect to regulation, requires DNA and protease cofactor for maximal activation. Inside nascent virions, becomes partially activated by binding to the viral DNA, allowing it to cleave the cofactor that binds to the protease and fully activates it. Actin, like the viral protease cofactor, seems to act as a cofactor in the cleavage of cytokeratin 18 and of actin itself. Cleaves viral precursor proteins (pTP, pIIIa, pVI, pVII, pVIII, and pX) inside newly assembled particles giving rise to mature virions. Protease complexed to its cofactor slides along the viral DNA to specifically locate and cleave the viral precursors. Mature virions have a weakened organization compared to the unmature virions, thereby facilitating subsequent uncoating. Without maturation, the particle lacks infectivity and is unable to uncoat. Late in adenovirus infection, in the cytoplasm, may participate in the cytoskeleton destruction. Cleaves host cell cytoskeletal keratins K7 and K18. This Bos taurus (Bovine) protein is Protease.